A 623-amino-acid polypeptide reads, in one-letter code: Kelch repeat and BTB domain-containing protein 11 (623 aa).

A disordered region spans residues 1–129; sequence MEHAVAPCVL…PEEPGEPAPV (129 aa). The span at 12-31 shows a compositional bias: low complexity; sequence PGTEPGAAGESESEGAASPA. Positions 42–55 are enriched in polar residues; that stretch reads CFSSGEESPPQSLA. A phosphoserine mark is found at Ser64, Ser67, Ser87, and Ser107. Low complexity predominate over residues 79-91; the sequence is EAGSAGAASPEEL. The region spanning 140–196 is the BTB domain; the sequence is PDLVLEVSGRRLRAHKAVLAARSDYFRARASRDVLRVQGVSLTALRLLLADAYSGRM. 4 Kelch repeats span residues 311-359, 360-412, 413-455, and 458-500; these read RPQS…VLYN, YLFV…ALDG, HLYA…ATTC, and EIYV…ALDG.

This Homo sapiens (Human) protein is Kelch repeat and BTB domain-containing protein 11 (KBTBD11).